Here is a 174-residue protein sequence, read N- to C-terminus: Probable E3 ubiquitin-protein ligase RHA4A (174 aa).

The segment at 105–147 (CCVCLGEFELKEELVEMPLCKHIFHLDCIHLWLYSHNTCPLCR) adopts an RING-type; atypical zinc-finger fold. Residues 155–174 (TKTSVDDDNDHPDSPQTSPV) are disordered.

In terms of tissue distribution, expressed in stems, flowers, cauline leaves and roots.

It carries out the reaction S-ubiquitinyl-[E2 ubiquitin-conjugating enzyme]-L-cysteine + [acceptor protein]-L-lysine = [E2 ubiquitin-conjugating enzyme]-L-cysteine + N(6)-ubiquitinyl-[acceptor protein]-L-lysine.. It participates in protein modification; protein ubiquitination. In terms of biological role, probable E3 ubiquitin-protein ligase that may possess E3 ubiquitin ligase activity in vitro. The polypeptide is Probable E3 ubiquitin-protein ligase RHA4A (Arabidopsis thaliana (Mouse-ear cress)).